Here is a 213-residue protein sequence, read N- to C-terminus: UPF0319 protein HAPS_0727 (213 aa).

Positions 1–21 are cleaved as a signal peptide; that stretch reads MKLGKIALAMTALIAGTTAFA.

This sequence belongs to the UPF0319 family.

This chain is UPF0319 protein HAPS_0727, found in Glaesserella parasuis serovar 5 (strain SH0165) (Haemophilus parasuis).